The sequence spans 228 residues: Ribulose-phosphate 3-epimerase (228 aa).

Position 9 (Ser9) interacts with substrate. Positions 34, 36, 68, and 177 each coordinate a divalent metal cation. Residue Asp36 is the Proton acceptor of the active site. Substrate-binding positions include His68, 177 to 179, and 199 to 200; these read DGG and GS. Asp177 acts as the Proton donor in catalysis.

This sequence belongs to the ribulose-phosphate 3-epimerase family. The cofactor is a divalent metal cation.

The enzyme catalyses D-ribulose 5-phosphate = D-xylulose 5-phosphate. It functions in the pathway carbohydrate degradation. Catalyzes the reversible epimerization of D-ribulose 5-phosphate to D-xylulose 5-phosphate. This chain is Ribulose-phosphate 3-epimerase, found in Buchnera aphidicola subsp. Schizaphis graminum (strain Sg).